The following is a 189-amino-acid chain: GTP cyclohydrolase 1 (189 aa).

C78, H81, and C150 together coordinate Zn(2+).

This sequence belongs to the GTP cyclohydrolase I family. Homomer.

The enzyme catalyses GTP + H2O = 7,8-dihydroneopterin 3'-triphosphate + formate + H(+). It functions in the pathway cofactor biosynthesis; 7,8-dihydroneopterin triphosphate biosynthesis; 7,8-dihydroneopterin triphosphate from GTP: step 1/1. The chain is GTP cyclohydrolase 1 from Listeria monocytogenes serotype 4b (strain CLIP80459).